Here is a 591-residue protein sequence, read N- to C-terminus: Putative F-box protein At1g32140 (591 aa).

The F-box domain maps to 2–49 (TMMSDLSLDLVEEILCRVPITSLKAVRSSCKLWNVLSKNRILCKTEAR). Basic residues predominate over residues 567–581 (AGRKRKEKKTKRKSK). A disordered region spans residues 567-591 (AGRKRKEKKTKRKSKDKQMKLSNKV).

This Arabidopsis thaliana (Mouse-ear cress) protein is Putative F-box protein At1g32140.